Consider the following 367-residue polypeptide: Alanine racemase (367 aa).

K40 functions as the Proton acceptor; specific for D-alanine in the catalytic mechanism. K40 bears the N6-(pyridoxal phosphate)lysine mark. A substrate-binding site is contributed by R136. Catalysis depends on Y263, which acts as the Proton acceptor; specific for L-alanine. M310 serves as a coordination point for substrate.

This sequence belongs to the alanine racemase family. Pyridoxal 5'-phosphate serves as cofactor.

It catalyses the reaction L-alanine = D-alanine. Its pathway is amino-acid biosynthesis; D-alanine biosynthesis; D-alanine from L-alanine: step 1/1. In terms of biological role, catalyzes the interconversion of L-alanine and D-alanine. May also act on other amino acids. This Streptococcus thermophilus (strain ATCC BAA-250 / LMG 18311) protein is Alanine racemase (alr).